We begin with the raw amino-acid sequence, 214 residues long: Holliday junction branch migration complex subunit RuvA (214 aa).

Residues 1–63 are domain I; that stretch reads MISSLRGTVL…EDSLTLFGFP (63 aa). The segment at 64–139 is domain II; it reads GPDELRAFEL…KLFVTQPRTR (76 aa). The interval 139–143 is flexible linker; it reads RSASS. The interval 144–214 is domain III; that stretch reads AASTVTADVV…APAAAQAADR (71 aa).

Belongs to the RuvA family. As to quaternary structure, homotetramer. Forms an RuvA(8)-RuvB(12)-Holliday junction (HJ) complex. HJ DNA is sandwiched between 2 RuvA tetramers; dsDNA enters through RuvA and exits via RuvB. An RuvB hexamer assembles on each DNA strand where it exits the tetramer. Each RuvB hexamer is contacted by two RuvA subunits (via domain III) on 2 adjacent RuvB subunits; this complex drives branch migration. In the full resolvosome a probable DNA-RuvA(4)-RuvB(12)-RuvC(2) complex forms which resolves the HJ.

It is found in the cytoplasm. Functionally, the RuvA-RuvB-RuvC complex processes Holliday junction (HJ) DNA during genetic recombination and DNA repair, while the RuvA-RuvB complex plays an important role in the rescue of blocked DNA replication forks via replication fork reversal (RFR). RuvA specifically binds to HJ cruciform DNA, conferring on it an open structure. The RuvB hexamer acts as an ATP-dependent pump, pulling dsDNA into and through the RuvAB complex. HJ branch migration allows RuvC to scan DNA until it finds its consensus sequence, where it cleaves and resolves the cruciform DNA. This Clavibacter sepedonicus (Clavibacter michiganensis subsp. sepedonicus) protein is Holliday junction branch migration complex subunit RuvA.